We begin with the raw amino-acid sequence, 314 residues long: Ribonuclease Z (314 aa).

Residues histidine 61, histidine 63, aspartate 65, histidine 66, histidine 137, aspartate 207, and histidine 263 each contribute to the Zn(2+) site. The active-site Proton acceptor is aspartate 65.

It belongs to the RNase Z family. As to quaternary structure, homodimer. The cofactor is Zn(2+).

The catalysed reaction is Endonucleolytic cleavage of RNA, removing extra 3' nucleotides from tRNA precursor, generating 3' termini of tRNAs. A 3'-hydroxy group is left at the tRNA terminus and a 5'-phosphoryl group is left at the trailer molecule.. Zinc phosphodiesterase, which displays some tRNA 3'-processing endonuclease activity. Probably involved in tRNA maturation, by removing a 3'-trailer from precursor tRNA. This Thermococcus kodakarensis (strain ATCC BAA-918 / JCM 12380 / KOD1) (Pyrococcus kodakaraensis (strain KOD1)) protein is Ribonuclease Z.